Here is a 228-residue protein sequence, read N- to C-terminus: Aspartyl protease inhibitor (228 aa).

The N-terminal stretch at 1–15 (MKLIELCVLCAIAFA) is a signal peptide. Residues 88-112 (KLKSRMSGKKEEKAAVTSTKDEDLP) show a composition bias toward basic and acidic residues. The interval 88–119 (KLKSRMSGKKEEKAAVTSTKDEDLPKPPQKPS) is disordered. Cys134 and Cys224 are oxidised to a cystine.

Belongs to the protease inhibitor I33 family.

It localises to the secreted. In terms of biological role, aspartyl protease inhibitor. This Trichostrongylus colubriformis (Black scour worm) protein is Aspartyl protease inhibitor.